We begin with the raw amino-acid sequence, 228 residues long: Ribulose-phosphate 3-epimerase (228 aa).

Serine 11 lines the substrate pocket. Residues histidine 36, aspartate 38, and histidine 69 each coordinate a divalent metal cation. Aspartate 38 serves as the catalytic Proton acceptor. Substrate is bound by residues histidine 69, glycine 145 to glycine 148, aspartate 180 to glycine 182, and alanine 202 to serine 203. Residue aspartate 180 participates in a divalent metal cation binding. The Proton donor role is filled by aspartate 180.

The protein belongs to the ribulose-phosphate 3-epimerase family. It depends on a divalent metal cation as a cofactor.

The enzyme catalyses D-ribulose 5-phosphate = D-xylulose 5-phosphate. It participates in carbohydrate degradation. In terms of biological role, catalyzes the reversible epimerization of D-ribulose 5-phosphate to D-xylulose 5-phosphate. The sequence is that of Ribulose-phosphate 3-epimerase from Chlamydia muridarum (strain MoPn / Nigg).